We begin with the raw amino-acid sequence, 224 residues long: Octanoyltransferase (224 aa).

Residues 29 to 224 (PGTPDELWLC…GDRLESYLSP (196 aa)) enclose the BPL/LPL catalytic domain. Substrate-binding positions include 68 to 75 (RGGQVTYH), 157 to 159 (ALG), and 170 to 172 (GLA). The active-site Acyl-thioester intermediate is cysteine 188.

Belongs to the LipB family.

Its subcellular location is the cytoplasm. It carries out the reaction octanoyl-[ACP] + L-lysyl-[protein] = N(6)-octanoyl-L-lysyl-[protein] + holo-[ACP] + H(+). It participates in protein modification; protein lipoylation via endogenous pathway; protein N(6)-(lipoyl)lysine from octanoyl-[acyl-carrier-protein]: step 1/2. Functionally, catalyzes the transfer of endogenously produced octanoic acid from octanoyl-acyl-carrier-protein onto the lipoyl domains of lipoate-dependent enzymes. Lipoyl-ACP can also act as a substrate although octanoyl-ACP is likely to be the physiological substrate. The sequence is that of Octanoyltransferase from Methylibium petroleiphilum (strain ATCC BAA-1232 / LMG 22953 / PM1).